The chain runs to 38 residues: Mu-agatoxin-Hc1c (38 aa).

4 disulfide bridges follow: cysteine 3/cysteine 19, cysteine 10/cysteine 24, cysteine 18/cysteine 34, and cysteine 26/cysteine 32. Serine amide is present on serine 38.

The protein belongs to the neurotoxin 07 (Beta/delta-agtx) family. 02 (aga-3) subfamily. In terms of tissue distribution, expressed by the venom gland.

The protein resides in the secreted. Functionally, insecticidal neurotoxin that induces irreversible neuromuscular blockade in house crickets (A.domesticus). Modifies presynaptic voltage-gated sodium channels (Nav), causing them to open at the normal resting potential of the nerve. This leads to spontaneous release of neurotransmitter and repetitive action potentials in motor neurons. This is Mu-agatoxin-Hc1c from Hololena curta (Funnel-web spider).